A 193-amino-acid polypeptide reads, in one-letter code: MQETALLNMVPRTSTSKGANKLLRNNGYLPGNIFGKGMESISIAVKKDEFKKSIKEYGRNAVFKLVDTNNKEYTVMTKEITVAPLINEISHLNFQLVSLSEAIKQEVAFKIIGTEFLESKRLLLNSHVDSVPVSGLPHDIPHELEIDVSSMNSGDSLLFKDIKLPEGITSDVDPELKIITVKGLKRQEVAASE.

This sequence belongs to the bacterial ribosomal protein bL25 family. CTC subfamily. Part of the 50S ribosomal subunit; part of the 5S rRNA/L5/L18/L25 subcomplex. Contacts the 5S rRNA. Binds to the 5S rRNA independently of L5 and L18.

This is one of the proteins that binds to the 5S RNA in the ribosome where it forms part of the central protuberance. This chain is Large ribosomal subunit protein bL25, found in Lachnoclostridium phytofermentans (strain ATCC 700394 / DSM 18823 / ISDg) (Clostridium phytofermentans).